The primary structure comprises 338 residues: Ribosomal RNA small subunit methyltransferase H (338 aa).

S-adenosyl-L-methionine contacts are provided by residues 46–48, D63, F90, D106, and Q113; that span reads GGY.

This sequence belongs to the methyltransferase superfamily. RsmH family.

The protein resides in the cytoplasm. It carries out the reaction cytidine(1402) in 16S rRNA + S-adenosyl-L-methionine = N(4)-methylcytidine(1402) in 16S rRNA + S-adenosyl-L-homocysteine + H(+). Its function is as follows. Specifically methylates the N4 position of cytidine in position 1402 (C1402) of 16S rRNA. The protein is Ribosomal RNA small subunit methyltransferase H of Mesorhizobium japonicum (strain LMG 29417 / CECT 9101 / MAFF 303099) (Mesorhizobium loti (strain MAFF 303099)).